Reading from the N-terminus, the 416-residue chain is Enterobactin exporter EntS (416 aa).

Residues 1 to 21 (MNKQSWLLNLSLLKTHPAFRA) are Cytoplasmic-facing. Residues 22–42 (VFLARFISIVSLGLLGVAVPV) traverse the membrane as a helical segment. The Periplasmic segment spans residues 43 to 55 (QIQMMTHSTWQVG). A helical membrane pass occupies residues 56-76 (LSVTLTGGAMFVGLMVGGVLA). At 77 to 83 (DRYERKK) the chain is on the cytoplasmic side. The chain crosses the membrane as a helical span at residues 84-104 (VILLARGTCGIGFIGLCLNAL). Over 105–109 (LPEPS) the chain is Periplasmic. The chain crosses the membrane as a helical span at residues 110–130 (LLAIYLLGLWDGFFASLGVTA). Residues 131 to 156 (LLAATPALVGRENLMQAGAITMLTVR) lie on the Cytoplasmic side of the membrane. Residues 157–177 (LGSVISPMIGGLLLATGGVAW) form a helical membrane-spanning segment. A topological domain (periplasmic) is located at residue Asn178. Residues 179–199 (YGLAAAGTFITLLPLLSLPAL) form a helical membrane-spanning segment. Residues 200–218 (PPPPQPREHPLKSLLAGFR) lie on the Cytoplasmic side of the membrane. The helical transmembrane segment at 219–239 (FLLASPLVGGIALLGGLLTMA) threads the bilayer. The Periplasmic segment spans residues 240-256 (SAVRVLYPALADNWQMS). Residues 257-277 (AAQIGFLYAAIPLGAAIGALT) form a helical membrane-spanning segment. At 278–287 (SGKLAHSARP) the chain is on the cytoplasmic side. The chain crosses the membrane as a helical span at residues 288–307 (GLLMLLSTLGSFLAIGLFGL). The Periplasmic portion of the chain corresponds to 308 to 313 (MPMWIL). The helical transmembrane segment at 314-336 (GVVCLALFGWLSAVSSLLQYTML) threads the bilayer. Residues 337–356 (QTQTPEAMLGRINGLWTAQN) lie on the Cytoplasmic side of the membrane. A helical membrane pass occupies residues 357-377 (VTGDAIGAALLGGLGAMMTPV). Ala378 is a topological domain (periplasmic). Residues 379 to 399 (SASASGFGLLIIGVLLLLVLV) form a helical membrane-spanning segment. The Cytoplasmic segment spans residues 400 to 416 (ELRRFRQTPPQVTASDS).

The protein belongs to the major facilitator superfamily. EntS (TC 2.A.1.38) family.

The protein resides in the cell inner membrane. Functionally, component of an export pathway for enterobactin. The polypeptide is Enterobactin exporter EntS (Escherichia coli (strain 55989 / EAEC)).